The sequence spans 146 residues: NADH-ubiquinone oxidoreductase chain 6 (146 aa).

Helical transmembrane passes span 10–30 (ILAI…LLFV), 43–63 (LMGI…FLFI), 81–101 (VIVL…PIAI), and 124–144 (APML…AIAM).

The protein belongs to the complex I subunit 6 family.

It localises to the mitochondrion membrane. The catalysed reaction is a ubiquinone + NADH + 5 H(+)(in) = a ubiquinol + NAD(+) + 4 H(+)(out). Its function is as follows. Core subunit of the mitochondrial membrane respiratory chain NADH dehydrogenase (Complex I) that is believed to belong to the minimal assembly required for catalysis. Complex I functions in the transfer of electrons from NADH to the respiratory chain. The immediate electron acceptor for the enzyme is believed to be ubiquinone. The protein is NADH-ubiquinone oxidoreductase chain 6 (NAD6) of Candida albicans (strain SC5314 / ATCC MYA-2876) (Yeast).